The sequence spans 542 residues: GMP synthase [glutamine-hydrolyzing] (542 aa).

One can recognise a Glutamine amidotransferase type-1 domain in the interval 28–218 (IIVILDFGSQ…VYHICHCEPT (191 aa)). The active-site Nucleophile is C105. Residues H192 and E194 contribute to the active site. The 199-residue stretch at 219–417 (WTTAAFIEES…IGLPEEIVRR (199 aa)) folds into the GMPS ATP-PPase domain. 246–252 (SGGVDSS) is a binding site for ATP.

In terms of assembly, homodimer.

The enzyme catalyses XMP + L-glutamine + ATP + H2O = GMP + L-glutamate + AMP + diphosphate + 2 H(+). The protein operates within purine metabolism; GMP biosynthesis; GMP from XMP (L-Gln route): step 1/1. In terms of biological role, catalyzes the synthesis of GMP from XMP. The sequence is that of GMP synthase [glutamine-hydrolyzing] (guaA) from Synechocystis sp. (strain ATCC 27184 / PCC 6803 / Kazusa).